Here is a 416-residue protein sequence, read N- to C-terminus: UDP-N-acetylmuramoylalanine--D-glutamate ligase (416 aa).

Residue 108 to 114 (GTTGKTT) participates in ATP binding.

The protein belongs to the MurCDEF family.

It localises to the cytoplasm. The catalysed reaction is UDP-N-acetyl-alpha-D-muramoyl-L-alanine + D-glutamate + ATP = UDP-N-acetyl-alpha-D-muramoyl-L-alanyl-D-glutamate + ADP + phosphate + H(+). It participates in cell wall biogenesis; peptidoglycan biosynthesis. Functionally, cell wall formation. Catalyzes the addition of glutamate to the nucleotide precursor UDP-N-acetylmuramoyl-L-alanine (UMA). This chain is UDP-N-acetylmuramoylalanine--D-glutamate ligase, found in Chlamydia trachomatis serovar A (strain ATCC VR-571B / DSM 19440 / HAR-13).